A 104-amino-acid polypeptide reads, in one-letter code: NADH-quinone oxidoreductase subunit K (104 aa).

3 helical membrane passes run 4–24 (VPAS…LFGA), 31–51 (VIVL…LVAF), and 67–87 (LFTM…LIAL).

This sequence belongs to the complex I subunit 4L family. In terms of assembly, NDH-1 is composed of 14 different subunits. Subunits NuoA, H, J, K, L, M, N constitute the membrane sector of the complex.

The protein localises to the cell membrane. The enzyme catalyses a quinone + NADH + 5 H(+)(in) = a quinol + NAD(+) + 4 H(+)(out). Functionally, NDH-1 shuttles electrons from NADH, via FMN and iron-sulfur (Fe-S) centers, to quinones in the respiratory chain. The immediate electron acceptor for the enzyme in this species is believed to be a menaquinone. Couples the redox reaction to proton translocation (for every two electrons transferred, four hydrogen ions are translocated across the cytoplasmic membrane), and thus conserves the redox energy in a proton gradient. This is NADH-quinone oxidoreductase subunit K from Bacillus cereus (strain AH820).